A 666-amino-acid polypeptide reads, in one-letter code: Kinesin-like protein Nod (666 aa).

One can recognise a Kinesin motor domain in the interval 8 to 320 (AVRIAVREAP…LRFGTSAKKL (313 aa)). Residue 87-94 (GQTGTGKS) coordinates ATP. A disordered region spans residues 423–450 (GFHSDSDKDRHLMPPPTGQEPRQASSQN). Residues 639–666 (ENLFQVKSLPIWSGNKWERFCQINCLDT) are a coiled coil.

This sequence belongs to the TRAFAC class myosin-kinesin ATPase superfamily. Kinesin family. In terms of tissue distribution, in adult female, found in meiotically active ovaries.

It is found in the cytoplasm. Its subcellular location is the cytoskeleton. Functionally, required for the distributive chromosome segregation of non-exchange chromosomes during meiosis. May be a microtubule motor required to hold distributively 'paired' chromosomes at the metaphase plate until anaphase. The polypeptide is Kinesin-like protein Nod (nod) (Drosophila melanogaster (Fruit fly)).